The primary structure comprises 1006 residues: Probable sulfite reductase [NADPH] flavoprotein component (1006 aa).

The FAD-binding FR-type domain maps to 622–852 (EKVFTVHVRA…AVKTSVMKLP (231 aa)). Residues 658–669 (YDIGEALGVYGV) and 788–798 (IKRREYSISSS) contribute to the FAD site.

FAD is required as a cofactor. The cofactor is FMN.

The catalysed reaction is hydrogen sulfide + 3 NADP(+) + 3 H2O = sulfite + 3 NADPH + 4 H(+). The protein operates within sulfur metabolism; hydrogen sulfide biosynthesis; hydrogen sulfide from sulfite (NADPH route): step 1/1. This enzyme catalyzes the 6-electron reduction of sulfite to sulfide. This is one of several activities required for the biosynthesis of L-cysteine from sulfate. This chain is Probable sulfite reductase [NADPH] flavoprotein component, found in Schizosaccharomyces pombe (strain 972 / ATCC 24843) (Fission yeast).